Here is a 347-residue protein sequence, read N- to C-terminus: Tetracycline resistance determinant (347 aa).

8 helical membrane passes run 3 to 20 (VLGAAALALFLVPLLIVA), 30 to 52 (SPAALALFALGAAGLAVFIPVEL), 73 to 95 (CSAVNFTIGVGIFGTVTTLPLFL), 108 to 130 (LVVIPFMLGTIASQMVSGKLIAS), 137 to 156 (LAIVGLGSMAGALLAMATTG), 161 to 183 (MWGIVLIVLWLGVGIGLSQTVIT), 204 to 226 (CAGQIGGSTGIAVLFSVMFAVAL), and 294 to 316 (GFHIMFLPGGVVLLAGFVMTWFL). The disordered stretch occupies residues 321-347 (EETAPEEERPAESGAGAKNGPLPASDA).

It belongs to the major facilitator superfamily. TCR/Tet family.

It is found in the cell membrane. Functionally, resistance to tetracycline by an active tetracycline efflux. This is an energy-dependent process that decreases the accumulation of the antibiotic in whole cells. This protein functions as a metal-tetracycline/H(+) antiporter. This Streptomyces rimosus protein is Tetracycline resistance determinant (tetB).